The following is a 231-amino-acid chain: uncharacterized protein (231 aa).

The next 4 membrane-spanning stretches (helical) occupy residues 39–59 (FCIS…YGPF), 70–90 (ALSL…VPVI), 156–176 (AIIS…GGSI), and 189–206 (IVAI…NMFF).

Belongs to the FliR/MopE/SpaR family.

It localises to the cell membrane. This is an uncharacterized protein from Escherichia coli (strain K12).